Consider the following 442-residue polypeptide: tRNA-2-methylthio-N(6)-dimethylallyladenosine synthase (442 aa).

The region spanning 2–117 (QGLYIKSYGC…LPELIIKARR (116 aa)) is the MTTase N-terminal domain. 6 residues coordinate [4Fe-4S] cluster: cysteine 11, cysteine 47, cysteine 80, cysteine 157, cysteine 161, and cysteine 164. The 232-residue stretch at 143–374 (KNQEVSAFIS…QELLREQQLA (232 aa)) folds into the Radical SAM core domain. A TRAM domain is found at 377-442 (RNMIGQTCSV…QNSVTGIVVN (66 aa)).

This sequence belongs to the methylthiotransferase family. MiaB subfamily. As to quaternary structure, monomer. [4Fe-4S] cluster serves as cofactor.

The protein resides in the cytoplasm. The catalysed reaction is N(6)-dimethylallyladenosine(37) in tRNA + (sulfur carrier)-SH + AH2 + 2 S-adenosyl-L-methionine = 2-methylsulfanyl-N(6)-dimethylallyladenosine(37) in tRNA + (sulfur carrier)-H + 5'-deoxyadenosine + L-methionine + A + S-adenosyl-L-homocysteine + 2 H(+). Its function is as follows. Catalyzes the methylthiolation of N6-(dimethylallyl)adenosine (i(6)A), leading to the formation of 2-methylthio-N6-(dimethylallyl)adenosine (ms(2)i(6)A) at position 37 in tRNAs that read codons beginning with uridine. This is tRNA-2-methylthio-N(6)-dimethylallyladenosine synthase from Ehrlichia chaffeensis (strain ATCC CRL-10679 / Arkansas).